Reading from the N-terminus, the 446-residue chain is MTEQKKRLEKLSGVKGMNDILPQDAGLWEFFETTVKSMLRSYGYQNIRTPIVEHTQLFTRGIGEVTDIVEKEMYSFTDALNGENLTMRPENTAAVVRASIEHNMLYDGPKRLWYIGPMFRHERPQRGRYRQFHQVGVEALGFAGPDTDAEIILMCQRLWDDLGLTGIKLEINSLGLAEERAKHRVELIAYLEKHMDVLDEDAKRRLYTNPLRVLDTKNPALQAVAQNAPKLIDFLGDESRAHFEGLQRILKANNIPFTINPRLVRGLDYYNLTVFEWVTDKLGAQGTVAAGGRYDPLIEQLGGKPTAACGWAMGIERILELLKEENLVPENEGCDVYVAHQGEAARDQAFIVAERLRDTGLDVILHCSPDGQASSFKSQMKRADASGAAFAVILGEDEIANGTAGVKALRDSSQSNGKSEQQTVPLEDLTEYLINAMVASTEDGDD.

The protein belongs to the class-II aminoacyl-tRNA synthetase family. In terms of assembly, homodimer.

It localises to the cytoplasm. It carries out the reaction tRNA(His) + L-histidine + ATP = L-histidyl-tRNA(His) + AMP + diphosphate + H(+). This chain is Histidine--tRNA ligase, found in Paraburkholderia phymatum (strain DSM 17167 / CIP 108236 / LMG 21445 / STM815) (Burkholderia phymatum).